Here is a 302-residue protein sequence, read N- to C-terminus: Proteasome subunit beta (302 aa).

Positions 1–10 (MAGRVREVSH) are enriched in basic and acidic residues. The tract at residues 1–21 (MAGRVREVSHSSDQSGRLPAA) is disordered. The propeptide at 1-67 (MAGRVREVSH…GPGAGEPPHA (67 aa)) is removed in mature form; by autocatalysis. Threonine 68 functions as the Nucleophile in the catalytic mechanism. Residues 283 to 302 (RRGNPGGNPGISAVHGDGGN) form a disordered region.

The protein belongs to the peptidase T1B family. In terms of assembly, the 20S proteasome core is composed of 14 alpha and 14 beta subunits that assemble into four stacked heptameric rings, resulting in a barrel-shaped structure. The two inner rings, each composed of seven catalytic beta subunits, are sandwiched by two outer rings, each composed of seven alpha subunits. The catalytic chamber with the active sites is on the inside of the barrel. Has a gated structure, the ends of the cylinder being occluded by the N-termini of the alpha-subunits. Is capped by the proteasome-associated ATPase, ARC.

It is found in the cytoplasm. The enzyme catalyses Cleavage of peptide bonds with very broad specificity.. Its pathway is protein degradation; proteasomal Pup-dependent pathway. With respect to regulation, the formation of the proteasomal ATPase ARC-20S proteasome complex, likely via the docking of the C-termini of ARC into the intersubunit pockets in the alpha-rings, may trigger opening of the gate for substrate entry. Interconversion between the open-gate and close-gate conformations leads to a dynamic regulation of the 20S proteasome proteolysis activity. Component of the proteasome core, a large protease complex with broad specificity involved in protein degradation. In Kineococcus radiotolerans (strain ATCC BAA-149 / DSM 14245 / SRS30216), this protein is Proteasome subunit beta.